The primary structure comprises 466 residues: Exodeoxyribonuclease 7 large subunit (466 aa).

This sequence belongs to the XseA family. In terms of assembly, heterooligomer composed of large and small subunits.

The protein localises to the cytoplasm. The catalysed reaction is Exonucleolytic cleavage in either 5'- to 3'- or 3'- to 5'-direction to yield nucleoside 5'-phosphates.. Functionally, bidirectionally degrades single-stranded DNA into large acid-insoluble oligonucleotides, which are then degraded further into small acid-soluble oligonucleotides. This Ruthia magnifica subsp. Calyptogena magnifica protein is Exodeoxyribonuclease 7 large subunit.